Consider the following 144-residue polypeptide: Transcriptional regulator SlyA (144 aa).

The region spanning Glu2–His135 is the HTH marR-type domain. The H-T-H motif DNA-binding region spans Gln49–Asp72.

This sequence belongs to the SlyA family. As to quaternary structure, homodimer.

It is found in the cytoplasm. Functionally, transcription regulator that can specifically activate or repress expression of target genes. Required for virulence and survival in the macrophage environment. Probably activates the transcription of ssrB. Independently of ssrB activation, capable of stimulating the expression of virulence genes found on pathogenicity island 2 (SPI2). Probably activates expression of ispA, xseB genes, and of omp operon. This chain is Transcriptional regulator SlyA, found in Salmonella typhimurium (strain LT2 / SGSC1412 / ATCC 700720).